We begin with the raw amino-acid sequence, 719 residues long: MQGETRSISFDGREIRLTTRRYAPQAGGSVLIECGDTAVLVTATRANGREGIDFLPLTCDYEERLYAAGRIPGSFMRRESRPPERATLACRLIDRPIRPLFPSWMRDDLQIVATVMSVDERVPPDVLAVTGASLATLLAKIPFYGPMAAVRVGLLGDDFILNPSYREIERSELDLVVAGTAEGVVMVEAGAQQLPEEDMIEAIDFGYEAVLELIRHQKETIAELGIEQVVPEKPAEDTTVPDYLAKQCTKDIGAVLSQFTLTKAERDSQLDSIKAKAAEAIAALKETDAVRAAVSSNGKLLGNSFKALTKSMMRAQIVKDGKRVDGRSLDQVRPISAAAGVLPKRVHGSGLFQRGLTQVLSTATLGTPSDAQEMDDLNPSNEKHYLHHYNFPPYSVGETRPMRSPGRREIGHGALAERALLPVLPPKESFPYVLRVVSEVLSSNGSTSMGSVCGSTLALMDAGVPIAAPVAGAAMGLIREGSEVRVLTDIQGIEDFLGDMDFKVAGTEKGITALQMDMKITGLAMKTIGEAVTQARPARLHILEKMLEALDKPRDTMSPHAPRRLSFRIDPELIGTVIGPGGRTIKGITERTNTKIDIEDTGIVTVASHDGAAAEEAQKIIEGLTRRVSEGEYFDGKVTRVIPIGAFVEILPGKEGMIHISQLSDQRVEKVEDVVNVGDEVRVRVREIDNRGRINLTLRGVPQDGSDPQPTVILPIGES.

Residues Asp495 and Asp501 each contribute to the Mg(2+) site. Positions Pro562 to Ile621 constitute a KH domain. The S1 motif domain occupies Gly631–Arg699. The interval Arg699–Ser719 is disordered.

It belongs to the polyribonucleotide nucleotidyltransferase family. Mg(2+) serves as cofactor.

It localises to the cytoplasm. It catalyses the reaction RNA(n+1) + phosphate = RNA(n) + a ribonucleoside 5'-diphosphate. Functionally, involved in mRNA degradation. Catalyzes the phosphorolysis of single-stranded polyribonucleotides processively in the 3'- to 5'-direction. In Synechococcus sp. (strain RCC307), this protein is Polyribonucleotide nucleotidyltransferase.